A 122-amino-acid polypeptide reads, in one-letter code: Small ribosomal subunit protein bS16 (122 aa).

The interval 87 to 122 (AQSNPKKALPKKKAQERAAASAAAAEKAAAAAAPEA) is disordered. Residues 103-122 (RAAASAAAAEKAAAAAAPEA) are compositionally biased toward low complexity.

It belongs to the bacterial ribosomal protein bS16 family.

This is Small ribosomal subunit protein bS16 from Methylocella silvestris (strain DSM 15510 / CIP 108128 / LMG 27833 / NCIMB 13906 / BL2).